We begin with the raw amino-acid sequence, 376 residues long: Anhydro-N-acetylmuramic acid kinase (376 aa).

Residue 11–18 (GTSMDGVD) coordinates ATP.

The protein belongs to the anhydro-N-acetylmuramic acid kinase family.

It carries out the reaction 1,6-anhydro-N-acetyl-beta-muramate + ATP + H2O = N-acetyl-D-muramate 6-phosphate + ADP + H(+). It functions in the pathway amino-sugar metabolism; 1,6-anhydro-N-acetylmuramate degradation. It participates in cell wall biogenesis; peptidoglycan recycling. Functionally, catalyzes the specific phosphorylation of 1,6-anhydro-N-acetylmuramic acid (anhMurNAc) with the simultaneous cleavage of the 1,6-anhydro ring, generating MurNAc-6-P. Is required for the utilization of anhMurNAc either imported from the medium or derived from its own cell wall murein, and thus plays a role in cell wall recycling. This is Anhydro-N-acetylmuramic acid kinase from Acinetobacter baylyi (strain ATCC 33305 / BD413 / ADP1).